Reading from the N-terminus, the 243-residue chain is Adapter protein MecA (243 aa).

The interval asparagine 119 to proline 140 is disordered.

It belongs to the MecA family. Homodimer.

Functionally, enables the recognition and targeting of unfolded and aggregated proteins to the ClpC protease or to other proteins involved in proteolysis. This Lactiplantibacillus plantarum (strain ATCC BAA-793 / NCIMB 8826 / WCFS1) (Lactobacillus plantarum) protein is Adapter protein MecA.